The following is a 59-amino-acid chain: Large ribosomal subunit protein bL32 (59 aa).

The segment covering 1–15 (MANPKRKQSKRRSAN) has biased composition (basic residues). Positions 1 to 48 (MANPKRKQSKRRSANRRAANAFIAPEFAKDPTDGSAFRPHRVNPKNGM) are disordered.

This sequence belongs to the bacterial ribosomal protein bL32 family.

This is Large ribosomal subunit protein bL32 from Opitutus terrae (strain DSM 11246 / JCM 15787 / PB90-1).